Reading from the N-terminus, the 117-residue chain is Anti-adapter protein IraM (117 aa).

The protein belongs to the IraM/RssC family.

It is found in the cytoplasm. Functionally, involved in the stabilization of the sigma stress factor RpoS. The polypeptide is Anti-adapter protein IraM (Klebsiella pneumoniae (strain 342)).